Reading from the N-terminus, the 262-residue chain is Adenosylcobinamide-GDP ribazoletransferase (262 aa).

A run of 8 helical transmembrane segments spans residues 4-21 (AWSG…IPIR), 37-57 (AFPL…FIFS), 62-82 (LSPL…AGGL), 112-132 (VGAF…LFVF), 141-161 (IFLI…LLIY), 181-201 (YDAH…CAIH), 202-222 (FSVW…VFVA), and 236-256 (DALG…IWLL).

It belongs to the CobS family. The cofactor is Mg(2+).

Its subcellular location is the cell membrane. The catalysed reaction is alpha-ribazole + adenosylcob(III)inamide-GDP = adenosylcob(III)alamin + GMP + H(+). The enzyme catalyses alpha-ribazole 5'-phosphate + adenosylcob(III)inamide-GDP = adenosylcob(III)alamin 5'-phosphate + GMP + H(+). It participates in cofactor biosynthesis; adenosylcobalamin biosynthesis; adenosylcobalamin from cob(II)yrinate a,c-diamide: step 7/7. Joins adenosylcobinamide-GDP and alpha-ribazole to generate adenosylcobalamin (Ado-cobalamin). Also synthesizes adenosylcobalamin 5'-phosphate from adenosylcobinamide-GDP and alpha-ribazole 5'-phosphate. This chain is Adenosylcobinamide-GDP ribazoletransferase, found in Geobacillus sp. (strain WCH70).